The sequence spans 370 residues: F-box/kelch-repeat protein At4g38940 (370 aa).

In terms of domain architecture, F-box spans 18–64 (PCLISLLPEEIVVDIVARVPRCYYPTLSQVSRRFRSLVASPEIYKRR). Kelch repeat units follow at residues 131 to 177 (NIFV…LIDR), 178 to 230 (KIYV…VIGG), and 263 to 315 (SACV…SYTG).

As to quaternary structure, part of a SCF (ASK-cullin-F-box) protein ligase complex. Interacts with SKP1A/ASK1, SKP1B/ASK2, ASK11, ASK13 and ASK18.

Its subcellular location is the nucleus. Its pathway is protein modification; protein ubiquitination. Functionally, component of SCF(ASK-cullin-F-box) E3 ubiquitin ligase complexes, which may mediate the ubiquitination and subsequent proteasomal degradation of target proteins. The chain is F-box/kelch-repeat protein At4g38940 from Arabidopsis thaliana (Mouse-ear cress).